A 166-amino-acid polypeptide reads, in one-letter code: Interferon gamma (166 aa).

The N-terminal stretch at 1-23 is a signal peptide; the sequence is MKYTSSFLALLLSVLLGFSGSYG. Residue Gln24 is modified to Pyrrolidone carboxylic acid. N-linked (GlcNAc...) asparagine glycosylation is found at Asn39 and Asn106.

This sequence belongs to the type II (or gamma) interferon family. As to quaternary structure, homodimer. Interacts with IFNGR1 (via extracellular domain); this interaction promotes IFNGR1 dimerization. As to expression, released primarily from activated T lymphocytes.

The protein resides in the secreted. In terms of biological role, type II interferon produced by immune cells such as T-cells and NK cells that plays crucial roles in antimicrobial, antiviral, and antitumor responses by activating effector immune cells and enhancing antigen presentation. Primarily signals through the JAK-STAT pathway after interaction with its receptor IFNGR1 to affect gene regulation. Upon IFNG binding, IFNGR1 intracellular domain opens out to allow association of downstream signaling components JAK2, JAK1 and STAT1, leading to STAT1 activation, nuclear translocation and transcription of IFNG-regulated genes. Many of the induced genes are transcription factors such as IRF1 that are able to further drive regulation of a next wave of transcription. Plays a role in class I antigen presentation pathway by inducing a replacement of catalytic proteasome subunits with immunoproteasome subunits. In turn, increases the quantity, quality, and repertoire of peptides for class I MHC loading. Increases the efficiency of peptide generation also by inducing the expression of activator PA28 that associates with the proteasome and alters its proteolytic cleavage preference. Up-regulates as well MHC II complexes on the cell surface by promoting expression of several key molecules such as cathepsins B/CTSB, H/CTSH, and L/CTSL. Participates in the regulation of hematopoietic stem cells during development and under homeostatic conditions by affecting their development, quiescence, and differentiation. The protein is Interferon gamma (IFNG) of Capra hircus (Goat).